We begin with the raw amino-acid sequence, 277 residues long: Caspase-3 (277 aa).

Met1 bears the N-acetylmethionine mark. Propeptides lie at residues 1 to 9 and 10 to 28; these read MENNETSVD and AKSI…KSMD. Lys11 carries the post-translational modification N6-acetyllysine. Ser26 bears the Phosphoserine mark. Residues His121 and Cys163 contribute to the active site. Cys163 is modified (S-nitrosocysteine; in inhibited form).

Belongs to the peptidase C14A family. Heterotetramer that consists of two anti-parallel arranged heterodimers, each one formed by a 17 kDa (p17) and a 12 kDa (p12) subunit. Interacts with BIRC6/bruce. In terms of processing, cleavage by granzyme B, caspase-6, caspase-8 and caspase-10 generates the two active subunits. Additional processing of the propeptides is likely due to the autocatalytic activity of the activated protease. Active heterodimers between the small subunit of caspase-7 protease and the large subunit of caspase-3 also occur and vice versa. S-nitrosylated on its catalytic site cysteine in unstimulated cell lines and denitrosylated upon activation of the Fas apoptotic pathway, associated with an increase in intracellular caspase activity. Fas therefore activates caspase-3 not only by inducing the cleavage of the caspase zymogen to its active subunits, but also by stimulating the denitrosylation of its active site thiol. Post-translationally, ubiquitinated by BIRC6; this activity is inhibited by DIABLO/SMAC.

It is found in the cytoplasm. The enzyme catalyses Strict requirement for an Asp residue at positions P1 and P4. It has a preferred cleavage sequence of Asp-Xaa-Xaa-Asp-|- with a hydrophobic amino-acid residue at P2 and a hydrophilic amino-acid residue at P3, although Val or Ala are also accepted at this position.. Its activity is regulated as follows. Inhibited by BIRC6; following inhibition of BIRC6-caspase binding by DIABLO/SMAC, BIRC6 is subjected to caspase cleavage, leading to an increase in active caspases. Its function is as follows. Involved in the activation cascade of caspases responsible for apoptosis execution. At the onset of apoptosis, it proteolytically cleaves poly(ADP-ribose) polymerase PARP1 at a '216-Asp-|-Gly-217' bond. Cleaves and activates sterol regulatory element binding proteins (SREBPs) between the basic helix-loop-helix leucine zipper domain and the membrane attachment domain. Cleaves and activates caspase-6, -7 and -9 (CASP6, CASP7 and CASP9, respectively). Cleaves and inactivates interleukin-18 (IL18). Triggers cell adhesion in sympathetic neurons through RET cleavage. Cleaves IL-1 beta between an Asp and an Ala, releasing the mature cytokine which is involved in a variety of inflammatory processes. Cleaves and inhibits serine/threonine-protein kinase AKT1 in response to oxidative stress. Acts as an inhibitor of type I interferon production during virus-induced apoptosis by mediating cleavage of antiviral proteins CGAS, IRF3 and MAVS, thereby preventing cytokine overproduction. Also involved in pyroptosis by mediating cleavage and activation of gasdermin-E (GSDME). Cleaves XRCC4 and phospholipid scramblase proteins XKR4, XKR8 and XKR9, leading to promote phosphatidylserine exposure on apoptotic cell surface. Cleaves BIRC6 following inhibition of BIRC6-caspase binding by DIABLO/SMAC. The sequence is that of Caspase-3 (CASP3) from Oryctolagus cuniculus (Rabbit).